The sequence spans 97 residues: Essential MCU regulator, mitochondrial (97 aa).

The N-terminal 35 residues, 1–35 (MIVPRLALPISLALQRVSRRVAEHPHNLRILQRHM), are a transit peptide targeting the mitochondrion. The helical transmembrane segment at 53-73 (PFGLLAIFCAVIPGLFVGATI) threads the bilayer.

This sequence belongs to the SMDT1/EMRE family.

The protein resides in the mitochondrion inner membrane. Its function is as follows. Essential regulatory subunit of the mitochondrial calcium uniporter MCU channel, a protein that mediates calcium uptake into mitochondria. In Drosophila melanogaster (Fruit fly), this protein is Essential MCU regulator, mitochondrial.